A 67-amino-acid chain; its full sequence is DNA-directed RNA polymerase subunit omega (67 aa).

This sequence belongs to the RNA polymerase subunit omega family. As to quaternary structure, the RNAP catalytic core consists of 2 alpha, 1 beta, 1 beta' and 1 omega subunit. When a sigma factor is associated with the core the holoenzyme is formed, which can initiate transcription.

The catalysed reaction is RNA(n) + a ribonucleoside 5'-triphosphate = RNA(n+1) + diphosphate. Functionally, promotes RNA polymerase assembly. Latches the N- and C-terminal regions of the beta' subunit thereby facilitating its interaction with the beta and alpha subunits. This is DNA-directed RNA polymerase subunit omega from Legionella pneumophila (strain Paris).